The primary structure comprises 90 residues: Large ribosomal subunit protein bL31 (90 aa).

Positions 71–90 (KVKKFPSNADNQKEPAEEQE) are disordered. A compositionally biased stretch (basic and acidic residues) spans 81-90 (NQKEPAEEQE).

Belongs to the bacterial ribosomal protein bL31 family. Type A subfamily. As to quaternary structure, part of the 50S ribosomal subunit.

Functionally, binds the 23S rRNA. The protein is Large ribosomal subunit protein bL31 (rpmE) of Aster yellows witches'-broom phytoplasma (strain AYWB).